A 440-amino-acid polypeptide reads, in one-letter code: Adenylosuccinate synthetase 1, chloroplastic (440 aa).

Residues 13–19 (GDEGKGK) and 41–43 (GHT) each bind GTP. Aspartate 14 serves as the catalytic Proton acceptor. Mg(2+) contacts are provided by aspartate 14 and glycine 41. IMP contacts are provided by residues 14 to 17 (DEGK), 39 to 42 (NAGH), threonine 135, arginine 149, glutamine 230, threonine 245, and arginine 313. Catalysis depends on histidine 42, which acts as the Proton donor. Position 309-315 (309-315 (TVTRRKR)) interacts with substrate. GTP is bound by residues arginine 315 and 341–343 (KLD).

This sequence belongs to the adenylosuccinate synthetase family. As to quaternary structure, homodimer. Mg(2+) serves as cofactor.

It is found in the plastid. The protein localises to the chloroplast. The catalysed reaction is IMP + L-aspartate + GTP = N(6)-(1,2-dicarboxyethyl)-AMP + GDP + phosphate + 2 H(+). It functions in the pathway purine metabolism; AMP biosynthesis via de novo pathway; AMP from IMP: step 1/2. In terms of biological role, plays an important role in the de novo pathway and in the salvage pathway of purine nucleotide biosynthesis. Catalyzes the first committed step in the biosynthesis of AMP from IMP. The chain is Adenylosuccinate synthetase 1, chloroplastic from Ricinus communis (Castor bean).